Here is a 344-residue protein sequence, read N- to C-terminus: Dihydroorotate dehydrogenase (quinone) (344 aa).

Residues 65 to 69 and threonine 89 contribute to the FMN site; that span reads AGLDK. Lysine 69 contacts substrate. Residue 114–118 coordinates substrate; it reads NRMGF. Positions 145 and 178 each coordinate FMN. A substrate-binding site is contributed by asparagine 178. The active-site Nucleophile is serine 181. Substrate is bound at residue asparagine 183. Residues lysine 223 and threonine 251 each coordinate FMN. 252 to 253 contributes to the substrate binding site; sequence NT. Residues glycine 274, glycine 303, and 324–325 contribute to the FMN site; that span reads YS.

The protein belongs to the dihydroorotate dehydrogenase family. Type 2 subfamily. As to quaternary structure, monomer. It depends on FMN as a cofactor.

The protein localises to the cell membrane. The enzyme catalyses (S)-dihydroorotate + a quinone = orotate + a quinol. Its pathway is pyrimidine metabolism; UMP biosynthesis via de novo pathway; orotate from (S)-dihydroorotate (quinone route): step 1/1. Functionally, catalyzes the conversion of dihydroorotate to orotate with quinone as electron acceptor. This chain is Dihydroorotate dehydrogenase (quinone), found in Cupriavidus pinatubonensis (strain JMP 134 / LMG 1197) (Cupriavidus necator (strain JMP 134)).